A 20-amino-acid polypeptide reads, in one-letter code: AIGXQPAAEAEAPFQISLMK.

The 20-residue stretch at 1–20 (AIGXQPAAEAEAPFQISLMK) folds into the Peptidase S1 domain.

Belongs to the peptidase S1 family.

It is found in the secreted. Its function is as follows. Protease that shows specificity similar to chymotrypsin. In Dermatophagoides pteronyssinus (European house dust mite), this protein is Mite allergen Der p 6 (DERP6).